Consider the following 212-residue polypeptide: ER lumen protein-retaining receptor 2 (212 aa).

Residues 1 to 4 lie on the Lumenal side of the membrane; sequence MNVF. A helical membrane pass occupies residues 5 to 24; the sequence is RLSGDLSHLAAIIILLLKIW. Topologically, residues 25–32 are cytoplasmic; the sequence is KSRSCAGI. The helical transmembrane segment at 33–52 threads the bilayer; sequence SGKSQLLFALVFTTRYLDLL. Residues 47-48 are interaction with the K-D-E-L motif on target proteins; it reads RY. Over 53–58 the chain is Lumenal; sequence TSFISL. The chain crosses the membrane as a helical span at residues 59–79; that stretch reads YNTSMKVIYIGCAYATVYLIY. The Cytoplasmic segment spans residues 80–92; that stretch reads MKFKATYDGNHDT. A helical membrane pass occupies residues 93–110; it reads FRVEFLVVPVGGLSVLVN. The Lumenal segment spans residues 111–116; the sequence is HDFSPL. The helical transmembrane segment at 117–135 threads the bilayer; that stretch reads EILWTFSIYLESVAILPQL. The Cytoplasmic segment spans residues 136-149; that stretch reads FMISKTGEAETITT. A helical transmembrane segment spans residues 150–168; sequence HYLFFLGLYRALYLFNWIW. The segment at 159-169 is interaction with the K-D-E-L motif on target proteins; the sequence is RALYLFNWIWR. Over 169–178 the chain is Lumenal; the sequence is RYSFEGFFDL. Residues 179-199 form a helical membrane-spanning segment; the sequence is IAIVAGVVQTILYCDFFYLYV. Topologically, residues 200–212 are cytoplasmic; that stretch reads TKVLKGKKLSLPA. Positions 204–207 are important for recycling of cargo proteins with the sequence motif K-D-E-L from the Golgi to the endoplasmic reticulum; sequence KGKK.

The protein belongs to the ERD2 family.

It localises to the endoplasmic reticulum membrane. The protein localises to the golgi apparatus membrane. The protein resides in the cytoplasmic vesicle. It is found in the COPI-coated vesicle membrane. Functionally, receptor for the C-terminal sequence motif K-D-E-L that is present on endoplasmic reticulum resident proteins and that mediates their recycling from the Golgi back to the endoplasmic reticulum. Binding is pH dependent, and is optimal at pH 5-5.4. This Xenopus tropicalis (Western clawed frog) protein is ER lumen protein-retaining receptor 2 (kdelr2).